The chain runs to 215 residues: MGLRTTKQMGRGTKAPGHQEDHMVKEPVEDTDPSTLSFNMSDKYPIQDTELPKAEECDTITLNCPRNSDMKNQGEENGFPDSTGDPLPEISKDNSCKENCTCSSCLLRAPTISDLLNDQDLLDVIRIKLDPCHPTVKNWRNFASKWGMSYDELCFLEQRPQSPTLEFLLRNSQRTVGQLMELCRLYHRADVEKVLRRWVDEEWPKRERGDPSRHF.

Disordered regions lie at residues 1–41 (MGLR…FNMS) and 62–86 (LNCPRNSDMKNQGEENGFPDSTGDP). The segment covering 17–28 (GHQEDHMVKEPV) has biased composition (basic and acidic residues). A Death domain is found at 123-202 (DVIRIKLDPC…KVLRRWVDEE (80 aa)).

As to quaternary structure, self-associates and binds EDAR, TRAF1, TRAF2 and TRAF3. As to expression, detected in adult pancreas, placenta and fetal skin, and at lower levels in lung, thymus, prostate and testis.

It is found in the cytoplasm. Adapter protein that interacts with EDAR DEATH domain and couples the receptor to EDA signaling pathway during morphogenesis of ectodermal organs. Mediates the activation of NF-kappa-B. The protein is Ectodysplasin-A receptor-associated adapter protein (EDARADD) of Homo sapiens (Human).